Here is a 188-residue protein sequence, read N- to C-terminus: UPF0398 protein ABC2016 (188 aa).

Belongs to the UPF0398 family.

This chain is UPF0398 protein ABC2016, found in Shouchella clausii (strain KSM-K16) (Alkalihalobacillus clausii).